The primary structure comprises 1039 residues: RNA-binding protein Unr (1039 aa).

Polar residues predominate over residues 49 to 62; sequence TTLGLQPQGQGPSP. 2 disordered regions span residues 49 to 126 and 165 to 184; these read TTLG…QQQH and SIFG…PSQT. Low complexity-rich tracts occupy residues 63–80, 89–126, and 165–182; these read QQQQ…QHQQ, QQHM…QQQH, and SIFG…ADPS. Positions 186–250 constitute a CSD 1 domain; sequence RETGIIEKLL…GKPIASQVSK (65 aa). A CSD 2; degenerate domain is found at 261–337; sequence RVTGTVTTEL…GNLGACHIRL (77 aa). The CSD 3 domain occupies 345–413; it reads KYRGVVCSMK…GREFACNITR (69 aa). Positions 428–503 constitute a CSD 4; degenerate domain; it reads VYKGQVLKSL…RDQLQRATSI (76 aa). The region spanning 517–585 is the CSD 5 domain; it reads REQGTIASLK…SRLQAIRIKH (69 aa). Residues 593 to 673 form the CSD 6; degenerate domain; it reads FETLVASNIE…KECIAVNVQQ (81 aa). The disordered stretch occupies residues 721–741; sequence QNGYVMHGSPGGSTSSVGSNN. Positions 732 to 741 are enriched in low complexity; the sequence is GSTSSVGSNN. The region spanning 763–831 is the CSD 7 domain; sequence VYRGFIAVMK…NCLPAENVRM (69 aa). The region spanning 846–919 is the CSD 8; degenerate domain; sequence THNGVVARPL…SGRAACVNAV (74 aa). The 66-residue stretch at 922–987 folds into the CSD 9 domain; that stretch reads KKRATVDSIK…GKSSACNVLK (66 aa).

The protein belongs to the UNR family. As to quaternary structure, interacts with Sxl; cooperates with Sxl to prevent translation of msl-2 transcripts. Interacts with mle; promoting association between mle and roX2 non-coding RNA. Interacts (via CSD domain 7-9) with pAbp; promoting translation inhibition of msl-2 transcripts.

It is found in the cytoplasm. RNA-binding protein that acts as a regulator of dosage compensation in both males and females. In males, acts as positive regulator of dosage compensation by promoting assembly of the MSL complex, a multiprotein complex that mediates X-chromosome dosage compensation. Promotes MSL complex assembly via association with roX1 and roX2 non-coding RNA components of the MSL complex, facilitating the interaction between non-coding RNAs and mle. In females, acts as an inhibitor of dosage compensation together with Sxl by preventing production of msl-2 protein, an essential component of the MSL complex. Specifically binds to the 3'-UTR of msl-2 transcripts, and cooperates with Sxl to prevent translation initiation of msl-2 transcripts. Mechanistically, Sxl and Unr inhibit translation initiation by preventing ribosome recruitment after pAbp-mediated recruitment of the eIF4F complex. The sequence is that of RNA-binding protein Unr from Drosophila melanogaster (Fruit fly).